The primary structure comprises 463 residues: MTLAVNKKERAGVINPIFTCQPAGAEYATIGVKDCIPLVHGGQGCSMFVRLIFAQHLKENFDIASSSLHEASAVFGGMPRIEEGVKTLVARYPDLRLIPIITTCSTETIGDDVEGTINKVNKFLKKEYPNREVKLIPVHTPSYRGSQVTGYDAGVTSLITNLAKKGEPNGKLNIITGWVNPGDVTEVKHILSEMGVDANILLDTETFNAPTMPDKNSFTFGNTTIEDIAGSANAIGTIALCKYEGGNAAKFLQEQFDVPAIVGPTPIGIKNTDAWLQNIKKLTGKPIPESLVVERGKAIDSLADLAHMYFANKRVAIYGDPDLVIGLAEFCLEVELEPVLLLLGDDNQAASKDPRLAELAKRANHAEYDIDVIWNADLWELESRVKEKGDIDLILGHSKGRYIAIDNKIPMVRVGFPTFDRAGLWKNPVIGYRGAEWLGDAIANAMFADMEYKHDREWILNVW.

Residues Cys-20, Cys-45, Cys-104, and Ser-142 each coordinate [8Fe-7S] cluster.

Belongs to the NifD/NifK/NifE/NifN family. Hexamer of two alpha, two beta, and two delta chains. Requires [8Fe-7S] cluster as cofactor.

It catalyses the reaction N2 + 8 reduced [2Fe-2S]-[ferredoxin] + 16 ATP + 16 H2O = H2 + 8 oxidized [2Fe-2S]-[ferredoxin] + 2 NH4(+) + 16 ADP + 16 phosphate + 6 H(+). This vanadium-iron protein is part of the nitrogenase complex that catalyzes the key enzymatic reactions in nitrogen fixation. This chain is Nitrogenase vanadium-iron protein beta chain (vnfK), found in Trichormus variabilis (strain ATCC 29413 / PCC 7937) (Anabaena variabilis).